The primary structure comprises 211 residues: Uracil phosphoribosyltransferase (211 aa).

5-phospho-alpha-D-ribose 1-diphosphate contacts are provided by residues arginine 78, arginine 103, and 130-138 (DPMLATGGT). Uracil is bound by residues isoleucine 195 and 200–202 (GDA). A 5-phospho-alpha-D-ribose 1-diphosphate-binding site is contributed by aspartate 201.

The protein belongs to the UPRTase family. It depends on Mg(2+) as a cofactor.

It carries out the reaction UMP + diphosphate = 5-phospho-alpha-D-ribose 1-diphosphate + uracil. The protein operates within pyrimidine metabolism; UMP biosynthesis via salvage pathway; UMP from uracil: step 1/1. Allosterically activated by GTP. Catalyzes the conversion of uracil and 5-phospho-alpha-D-ribose 1-diphosphate (PRPP) to UMP and diphosphate. This chain is Uracil phosphoribosyltransferase, found in Pseudarthrobacter chlorophenolicus (strain ATCC 700700 / DSM 12829 / CIP 107037 / JCM 12360 / KCTC 9906 / NCIMB 13794 / A6) (Arthrobacter chlorophenolicus).